We begin with the raw amino-acid sequence, 1914 residues long: Fatty acid synthase beta subunit stcK (1914 aa).

Positions 17-395 are acetyltransferase (AT) domain; the sequence is LYACFGGQGP…LEGTGMNVVN (379 aa). The interval 446–692 is enoyl reductase (ER) domain; that stretch reads TRLLGTPHVM…LIVEAPGVKD (247 aa). The tract at residues 1009–1509 is dehydratase (DH) domain; that stretch reads GECAWGYAAL…RANDRLRMEI (501 aa). One can recognise a MaoC-like domain in the interval 1398-1532; sequence FLNRHGAPRV…VRVLKESTGE (135 aa). The segment at 1548–1900 is malonyl/palmitoyl transferase (MT/PT) domain; sequence YVFTGQGTQE…IRLVQGVTQS (353 aa).

This sequence belongs to the fungal fatty acid synthetase subunit beta family. In terms of assembly, [Alpha(6)beta(6)] hexamers of two multifunctional subunits (alpha and beta).

The catalysed reaction is acetyl-CoA + n malonyl-CoA + 2n NADPH + 4n H(+) = a long-chain-acyl-CoA + n CoA + n CO2 + 2n NADP(+).. It catalyses the reaction holo-[ACP] + acetyl-CoA = acetyl-[ACP] + CoA. The enzyme catalyses holo-[ACP] + malonyl-CoA = malonyl-[ACP] + CoA. It carries out the reaction a (3R)-hydroxyacyl-[ACP] = a (2E)-enoyl-[ACP] + H2O. The catalysed reaction is a 2,3-saturated acyl-[ACP] + NAD(+) = a (2E)-enoyl-[ACP] + NADH + H(+). It catalyses the reaction (9Z)-octadecenoyl-[ACP] + H2O = (9Z)-octadecenoate + holo-[ACP] + H(+). It functions in the pathway mycotoxin biosynthesis; sterigmatocystin biosynthesis. Functionally, fatty acid synthase beta subunit; part of the gene cluster that mediates the biosynthesis of sterigmatocystin (ST), a polyketide-derived furanocoumarin which is part of the most toxic and carcinogenic compounds among the known mycotoxins. The first step in the biosynthesis of sterigmatocystin is the production of hexanoate by the fatty acid synthase (FAS) units stcJ and stcK. The polyketide backbone is assembled by the non-reducing polyketide synthase stcA by condensation of the starter hexanoyl-CoA and 7 malonyl-CoA extender units followed by cyclization and release of norsolorinic acid. Norsolorinic acid is the first stable intermediate in the biosynthesis of sterigmatocystin and is converted into averantin (AVN) by the ketoreductase stcE which reduces the hexanoate ketone to an alcohol. Averantin is then oxidized into 5'-hydroxyaverantin (HAVN) by the cytochrome P450 monooxygenase stcF. 5'-hydroxyaverantin is further converted to 5'-oxyaverantin (OAVN) by the 5'-hydroxyaverantin dehydrogenase stcG. The next step is the conversion of OAVN into averufin (AVF) which is catalyzed by a yet to be identified enzyme. The cytochrome P450 monooxygenase stcB and the flavin-binding monooxygenase stcW are both required for the conversion of averufin to 1-hydroxyversicolorone. The esterase stcI probably catalyzes the formation of versiconal hemiacetal acetate from 1-hydroxyversicolorone. The oxydoreductase stcN then probably catalyzes the biosynthetic step from versiconal to versicolorin B (VERB). The next step is performed by the versicolorin B desaturase stcL to produce versicolorin A (VERA). The ketoreductase stcU and the cytochrome P450 monooxygenase stcS are involved in the conversion of versicolorin A to demethylsterigmatocystin. The Baeyer-Villiger oxidas stcQ and the reductase stcR might be involved in the biosynthetic step from versicolorin A to demethylsterigmatocystin. The final step in the biosynthesis of sterigmatocystin is the methylation of demethylsterigmatocystin catalyzed by the methyltransferase stcP. The sequence is that of Fatty acid synthase beta subunit stcK from Emericella nidulans (strain FGSC A4 / ATCC 38163 / CBS 112.46 / NRRL 194 / M139) (Aspergillus nidulans).